A 306-amino-acid chain; its full sequence is Porphobilinogen deaminase (306 aa).

The residue at position 241 (C241) is an S-(dipyrrolylmethanemethyl)cysteine.

It belongs to the HMBS family. As to quaternary structure, monomer. It depends on dipyrromethane as a cofactor.

The enzyme catalyses 4 porphobilinogen + H2O = hydroxymethylbilane + 4 NH4(+). Its pathway is porphyrin-containing compound metabolism; protoporphyrin-IX biosynthesis; coproporphyrinogen-III from 5-aminolevulinate: step 2/4. Tetrapolymerization of the monopyrrole PBG into the hydroxymethylbilane pre-uroporphyrinogen in several discrete steps. In Acidithiobacillus ferrooxidans (strain ATCC 23270 / DSM 14882 / CIP 104768 / NCIMB 8455) (Ferrobacillus ferrooxidans (strain ATCC 23270)), this protein is Porphobilinogen deaminase.